A 149-amino-acid chain; its full sequence is Calmodulin-like protein 3 (149 aa).

EF-hand domains follow at residues 8 to 43 (EQVT…LGQN), 44 to 79 (PTEA…KMKD), 81 to 116 (DNEE…LGEK), and 117 to 149 (LSDE…LVSK). Ca(2+) contacts are provided by Asp21, Asp23, Asp25, Cys27, Glu32, Asp57, Asp59, Asn61, Thr63, Glu68, Asp94, Asp96, Asn98, Glu105, Asp130, Asp132, Asp134, Gln136, and Glu141.

The protein belongs to the calmodulin family. Interacts with MYO10, the interaction is calcium-dependent and essential for MYO10 function in filopodial extension. Expressed in normal mammary, prostate, cervical, and epidermal tissues. It is greatly reduced or undetectable in transformed cells.

In terms of biological role, may function as a specific light chain of unconventional myosin-10 (MYO10), also enhances MYO10 translation, possibly by acting as a chaperone for the emerging MYO10 heavy chain protein. May compete with calmodulin by binding, with different affinities, to cellular substrates. This chain is Calmodulin-like protein 3 (CALML3), found in Homo sapiens (Human).